Here is a 448-residue protein sequence, read N- to C-terminus: Protein odr-4 homolog (448 aa).

The next 2 membrane-spanning stretches (helical) occupy residues 76 to 96 (ASQL…FLMT) and 428 to 448 (GLLI…YYII).

This sequence belongs to the ODR-4 family.

Its subcellular location is the membrane. Its function is as follows. May play a role in the trafficking of a subset of G-protein coupled receptors. In Xenopus tropicalis (Western clawed frog), this protein is Protein odr-4 homolog (odr4).